A 168-amino-acid polypeptide reads, in one-letter code: 2-C-methyl-D-erythritol 2,4-cyclodiphosphate synthase (168 aa).

2 residues coordinate a divalent metal cation: D11 and H13. 4-CDP-2-C-methyl-D-erythritol 2-phosphate-binding positions include D11–H13 and H38–S39. Position 46 (H46) interacts with a divalent metal cation. 4-CDP-2-C-methyl-D-erythritol 2-phosphate is bound by residues D60–G62, T133–D136, F140, and R143.

This sequence belongs to the IspF family. As to quaternary structure, homotrimer. The cofactor is a divalent metal cation.

The catalysed reaction is 4-CDP-2-C-methyl-D-erythritol 2-phosphate = 2-C-methyl-D-erythritol 2,4-cyclic diphosphate + CMP. The protein operates within isoprenoid biosynthesis; isopentenyl diphosphate biosynthesis via DXP pathway; isopentenyl diphosphate from 1-deoxy-D-xylulose 5-phosphate: step 4/6. Its function is as follows. Involved in the biosynthesis of isopentenyl diphosphate (IPP) and dimethylallyl diphosphate (DMAPP), two major building blocks of isoprenoid compounds. Catalyzes the conversion of 4-diphosphocytidyl-2-C-methyl-D-erythritol 2-phosphate (CDP-ME2P) to 2-C-methyl-D-erythritol 2,4-cyclodiphosphate (ME-CPP) with a corresponding release of cytidine 5-monophosphate (CMP). This Cutibacterium acnes (strain DSM 16379 / KPA171202) (Propionibacterium acnes) protein is 2-C-methyl-D-erythritol 2,4-cyclodiphosphate synthase.